We begin with the raw amino-acid sequence, 142 residues long: Large ribosomal subunit protein uL11 (142 aa).

The protein belongs to the universal ribosomal protein uL11 family. Part of the ribosomal stalk of the 50S ribosomal subunit. Interacts with L10 and the large rRNA to form the base of the stalk. L10 forms an elongated spine to which L12 dimers bind in a sequential fashion forming a multimeric L10(L12)X complex. Post-translationally, one or more lysine residues are methylated.

Functionally, forms part of the ribosomal stalk which helps the ribosome interact with GTP-bound translation factors. This chain is Large ribosomal subunit protein uL11, found in Dictyoglomus turgidum (strain DSM 6724 / Z-1310).